The following is a 314-amino-acid chain: DNA-directed RNA polymerase subunit alpha (314 aa).

Residues 1 to 227 (MIEFQKPTIS…EHLALFIDLS (227 aa)) form an alpha N-terminal domain (alpha-NTD) region. An alpha C-terminal domain (alpha-CTD) region spans residues 241-314 (VETVMENKEP…GQSFKQETEN (74 aa)).

This sequence belongs to the RNA polymerase alpha chain family. As to quaternary structure, homodimer. The RNAP catalytic core consists of 2 alpha, 1 beta, 1 beta' and 1 omega subunit. When a sigma factor is associated with the core the holoenzyme is formed, which can initiate transcription.

The enzyme catalyses RNA(n) + a ribonucleoside 5'-triphosphate = RNA(n+1) + diphosphate. DNA-dependent RNA polymerase catalyzes the transcription of DNA into RNA using the four ribonucleoside triphosphates as substrates. This is DNA-directed RNA polymerase subunit alpha from Oenococcus oeni (strain ATCC BAA-331 / PSU-1).